The sequence spans 250 residues: 3-deoxy-manno-octulosonate cytidylyltransferase (250 aa).

The protein belongs to the KdsB family.

The protein resides in the cytoplasm. It catalyses the reaction 3-deoxy-alpha-D-manno-oct-2-ulosonate + CTP = CMP-3-deoxy-beta-D-manno-octulosonate + diphosphate. The protein operates within nucleotide-sugar biosynthesis; CMP-3-deoxy-D-manno-octulosonate biosynthesis; CMP-3-deoxy-D-manno-octulosonate from 3-deoxy-D-manno-octulosonate and CTP: step 1/1. Its pathway is bacterial outer membrane biogenesis; lipopolysaccharide biosynthesis. Its function is as follows. Activates KDO (a required 8-carbon sugar) for incorporation into bacterial lipopolysaccharide in Gram-negative bacteria. In Bacteroides thetaiotaomicron (strain ATCC 29148 / DSM 2079 / JCM 5827 / CCUG 10774 / NCTC 10582 / VPI-5482 / E50), this protein is 3-deoxy-manno-octulosonate cytidylyltransferase.